Reading from the N-terminus, the 251-residue chain is uncharacterized protein (251 aa).

The next 5 membrane-spanning stretches (helical) occupy residues 22–42, 86–106, 120–140, 157–177, and 205–225; these read FLGV…DIVI, FFLS…VILA, LASS…AGIV, LGYF…IPYV, and IVAW…SFLA.

The protein resides in the cell membrane. This is an uncharacterized protein from Mycoplasma pneumoniae (strain ATCC 29342 / M129 / Subtype 1) (Mycoplasmoides pneumoniae).